Reading from the N-terminus, the 186-residue chain is Photosystem I assembly protein Ycf4 (186 aa).

The next 2 membrane-spanning stretches (helical) occupy residues 22 to 42 and 57 to 77; these read FCWACILFLGSLGFLVVGTSS and IIFFPQGIVMSFYGIAGLFIS.

The protein belongs to the Ycf4 family.

The protein resides in the plastid. The protein localises to the chloroplast thylakoid membrane. Functionally, seems to be required for the assembly of the photosystem I complex. The chain is Photosystem I assembly protein Ycf4 from Dioscorea elephantipes (Elephant's foot yam).